Here is a 655-residue protein sequence, read N- to C-terminus: uncharacterized protein (655 aa).

The region spanning 245–469 is the PE-PPE domain; the sequence is PGVIAQALFT…NLKVIVNLGY (225 aa).

Belongs to the mycobacterial PPE family.

This is an uncharacterized protein from Mycobacterium tuberculosis (strain ATCC 25618 / H37Rv).